Consider the following 739-residue polypeptide: Long-chain-fatty-acid--CoA ligase ACSBG2 (739 aa).

ATP is bound by residues Thr287–Lys295, Glu478–Ser483, Asp556, Arg571, and Lys684.

The protein belongs to the ATP-dependent AMP-binding enzyme family. Bubblegum subfamily.

It is found in the cytoplasm. It carries out the reaction a long-chain fatty acid + ATP + CoA = a long-chain fatty acyl-CoA + AMP + diphosphate. The enzyme catalyses (5Z,8Z,11Z,14Z)-eicosatetraenoate + ATP + CoA = (5Z,8Z,11Z,14Z)-eicosatetraenoyl-CoA + AMP + diphosphate. It catalyses the reaction hexadecanoate + ATP + CoA = hexadecanoyl-CoA + AMP + diphosphate. The catalysed reaction is (9Z)-octadecenoate + ATP + CoA = (9Z)-octadecenoyl-CoA + AMP + diphosphate. It carries out the reaction (9Z,12Z)-octadecadienoate + ATP + CoA = (9Z,12Z)-octadecadienoyl-CoA + AMP + diphosphate. The enzyme catalyses tetracosanoate + ATP + CoA = tetracosanoyl-CoA + AMP + diphosphate. In terms of biological role, catalyzes the conversion of fatty acids such as long chain and very long-chain fatty acids to their active form acyl-CoAs for both synthesis of cellular lipids, and degradation via beta-oxidation. Can activate diverse saturated, monosaturated and polyunsaturated fatty acids. This Xenopus laevis (African clawed frog) protein is Long-chain-fatty-acid--CoA ligase ACSBG2.